The primary structure comprises 351 residues: Ceramide hydroxylase (351 aa).

Helical transmembrane passes span 26-46 (AAIY…GFLI), 47-67 (AATT…MLAL), 141-161 (GFLF…AILI), and 204-224 (VACW…VVPV).

Belongs to the fatty acid desaturase type 1 family.

It is found in the cell inner membrane. It participates in lipid metabolism; sphingolipid metabolism. Involved in de novo bacterial ceramide synthesis. This is Ceramide hydroxylase from Caulobacter vibrioides (strain NA1000 / CB15N) (Caulobacter crescentus).